We begin with the raw amino-acid sequence, 222 residues long: Cytochrome b6 (222 aa).

A helical transmembrane segment spans residues 39–59 (IFYCLGGITLVCFIIQFATGF). Cysteine 42 contacts heme c. Residues histidine 93 and histidine 107 each coordinate heme b. A run of 3 helical transmembrane segments spans residues 97-117 (ASMM…TGGF), 123-143 (LTWM…VTGY), and 193-213 (LHTF…FLMI). Residues histidine 194 and histidine 209 each coordinate heme b.

The protein belongs to the cytochrome b family. PetB subfamily. As to quaternary structure, the 4 large subunits of the cytochrome b6-f complex are cytochrome b6, subunit IV (17 kDa polypeptide, PetD), cytochrome f and the Rieske protein, while the 4 small subunits are PetG, PetL, PetM and PetN. The complex functions as a dimer. It depends on heme b as a cofactor. Heme c serves as cofactor.

The protein localises to the cellular thylakoid membrane. In terms of biological role, component of the cytochrome b6-f complex, which mediates electron transfer between photosystem II (PSII) and photosystem I (PSI), cyclic electron flow around PSI, and state transitions. The protein is Cytochrome b6 of Rippkaea orientalis (strain PCC 8801 / RF-1) (Cyanothece sp. (strain PCC 8801)).